The primary structure comprises 169 residues: Chorismate pyruvate-lyase (169 aa).

Methionine 35, arginine 77, leucine 115, and glutamate 156 together coordinate substrate.

Belongs to the UbiC family. Monomer.

The protein localises to the cytoplasm. It carries out the reaction chorismate = 4-hydroxybenzoate + pyruvate. It participates in cofactor biosynthesis; ubiquinone biosynthesis. Functionally, removes the pyruvyl group from chorismate, with concomitant aromatization of the ring, to provide 4-hydroxybenzoate (4HB) for the ubiquinone pathway. The chain is Chorismate pyruvate-lyase from Cronobacter sakazakii (strain ATCC BAA-894) (Enterobacter sakazakii).